We begin with the raw amino-acid sequence, 374 residues long: Cyclin-dependent kinase 9 (374 aa).

The 300-residue stretch at tyrosine 19 to phenylalanine 318 folds into the Protein kinase domain. ATP-binding positions include isoleucine 25–valine 33 and lysine 48. Aspartate 151 acts as the Proton acceptor in catalysis. The segment at proline 345 to phenylalanine 374 is disordered. Positions glutamine 354–serine 368 are enriched in polar residues.

Belongs to the protein kinase superfamily. CMGC Ser/Thr protein kinase family. CDC2/CDKX subfamily. Component of the super elongation complex (SEC). Associates with ccnt1/cyclin-T1, ccnt2/cyclin-T2 or ccnk/cyclin-K to form active P-TEFb.

The protein localises to the nucleus. It is found in the cytoplasm. The protein resides in the PML body. The catalysed reaction is L-seryl-[protein] + ATP = O-phospho-L-seryl-[protein] + ADP + H(+). The enzyme catalyses L-threonyl-[protein] + ATP = O-phospho-L-threonyl-[protein] + ADP + H(+). It catalyses the reaction [DNA-directed RNA polymerase] + ATP = phospho-[DNA-directed RNA polymerase] + ADP + H(+). Protein kinase involved in the regulation of transcription. Member of the cyclin-dependent kinase pair (CDK9/cyclin-T) complex, also called positive transcription elongation factor b (P-TEFb), which facilitates the transition from abortive to productive elongation by phosphorylating the CTD (C-terminal domain) of the large subunit of RNA polymerase II (RNAP II) polr2a, supt5h and rdbp. This complex is inactive when in the 7SK snRNP complex form. Regulates cytokine inducible transcription networks by facilitating promoter recognition of target transcription factors. P-TEFb is also involved in cotranscriptional histone modification, mRNA processing and mRNA export. This Danio rerio (Zebrafish) protein is Cyclin-dependent kinase 9.